The sequence spans 62 residues: Overexpressed in colon carcinoma 1 protein homolog (62 aa).

Gly residues predominate over residues 1–16; it reads MGCGNSTAGGAGGRGA. The tract at residues 1–62 is disordered; that stretch reads MGCGNSTAGG…SGQTKAAPKD (62 aa).

It belongs to the OCC1 family.

In Gallus gallus (Chicken), this protein is Overexpressed in colon carcinoma 1 protein homolog.